A 431-amino-acid polypeptide reads, in one-letter code: 5'-deoxyadenosine deaminase (431 aa).

The Zn(2+) site is built by H65 and H67. 2 residues coordinate substrate: E94 and H185. H212 provides a ligand contact to Zn(2+). 2 residues coordinate substrate: E215 and D300. D300 is a Zn(2+) binding site.

The protein belongs to the metallo-dependent hydrolases superfamily. MTA/SAH deaminase family. As to quaternary structure, homotetramer. The cofactor is Zn(2+).

The enzyme catalyses 5'-deoxyadenosine + H2O + H(+) = 5'-deoxyinosine + NH4(+). It carries out the reaction S-adenosyl-L-homocysteine + H2O + H(+) = S-inosyl-L-homocysteine + NH4(+). It catalyses the reaction S-methyl-5'-thioadenosine + H2O + H(+) = S-methyl-5'-thioinosine + NH4(+). The catalysed reaction is adenosine + H2O + H(+) = inosine + NH4(+). The protein operates within amino-acid biosynthesis; S-adenosyl-L-methionine biosynthesis. Its function is as follows. Catalyzes the deamination of three SAM-derived enzymatic products, namely 5'-deoxyadenosine, S-adenosyl-L-homocysteine, and 5'-methylthioadenosine, to produce the inosine analogs. Can also deaminate adenosine. The preferred substrate for this enzyme is 5'-deoxyadenosine, but all these substrates are efficiently deaminated. Likely functions in a S-adenosyl-L-methionine (SAM) recycling pathway from S-adenosyl-L-homocysteine (SAH) produced from SAM-dependent methylation reactions. May also be involved in the recycling of 5'-deoxyadenosine, whereupon the 5'-deoxyribose moiety of 5'-deoxyinosine is further metabolized to deoxyhexoses used for the biosynthesis of aromatic amino acids in methanogens. In Methanopyrus kandleri (strain AV19 / DSM 6324 / JCM 9639 / NBRC 100938), this protein is 5'-deoxyadenosine deaminase.